A 717-amino-acid chain; its full sequence is Fatty acid oxidation complex subunit alpha (717 aa).

The interval 1–190 is enoyl-CoA hydratase; that stretch reads MESTSAFNLQ…KAGLVDDVVP (190 aa). Positions 306–717 are 3-hydroxyacyl-CoA dehydrogenase; it reads RALHSVGVLG…AGNLQAEMTV (412 aa).

It in the N-terminal section; belongs to the enoyl-CoA hydratase/isomerase family. This sequence in the central section; belongs to the 3-hydroxyacyl-CoA dehydrogenase family. Heterotetramer of two alpha chains (FadJ) and two beta chains (FadI).

It is found in the cytoplasm. The catalysed reaction is a (3S)-3-hydroxyacyl-CoA = a (2E)-enoyl-CoA + H2O. It catalyses the reaction a 4-saturated-(3S)-3-hydroxyacyl-CoA = a (3E)-enoyl-CoA + H2O. The enzyme catalyses a (3S)-3-hydroxyacyl-CoA + NAD(+) = a 3-oxoacyl-CoA + NADH + H(+). It carries out the reaction (3S)-3-hydroxybutanoyl-CoA = (3R)-3-hydroxybutanoyl-CoA. The protein operates within lipid metabolism; fatty acid beta-oxidation. Catalyzes the formation of a hydroxyacyl-CoA by addition of water on enoyl-CoA. Also exhibits 3-hydroxyacyl-CoA epimerase and 3-hydroxyacyl-CoA dehydrogenase activities. This is Fatty acid oxidation complex subunit alpha from Cronobacter sakazakii (strain ATCC BAA-894) (Enterobacter sakazakii).